A 157-amino-acid polypeptide reads, in one-letter code: Peptide methionine sulfoxide reductase MsrA (157 aa).

The active site involves cysteine 10.

This sequence belongs to the MsrA Met sulfoxide reductase family.

The enzyme catalyses L-methionyl-[protein] + [thioredoxin]-disulfide + H2O = L-methionyl-(S)-S-oxide-[protein] + [thioredoxin]-dithiol. It carries out the reaction [thioredoxin]-disulfide + L-methionine + H2O = L-methionine (S)-S-oxide + [thioredoxin]-dithiol. In terms of biological role, has an important function as a repair enzyme for proteins that have been inactivated by oxidation. Catalyzes the reversible oxidation-reduction of methionine sulfoxide in proteins to methionine. The chain is Peptide methionine sulfoxide reductase MsrA from Clostridium perfringens (strain 13 / Type A).